A 142-amino-acid chain; its full sequence is Hemoglobin subunit alpha-1/2 (142 aa).

Residues 2 to 142 (VLSADDKTNI…VSTVLTSKYR (141 aa)) enclose the Globin domain. Position 4 is a phosphoserine (Ser4). The residue at position 8 (Lys8) is an N6-succinyllysine. The residue at position 9 (Thr9) is a Phosphothreonine. Position 12 is an N6-succinyllysine (Lys12). Position 17 is an N6-acetyllysine; alternate (Lys17). Lys17 is modified (N6-succinyllysine; alternate). Phosphotyrosine is present on Tyr25. An N6-succinyllysine modification is found at Lys41. The residue at position 50 (Ser50) is a Phosphoserine. An O2-binding site is contributed by His59. Residue His88 coordinates heme b. The residue at position 103 (Ser103) is a Phosphoserine. Thr109 carries the post-translational modification Phosphothreonine. Phosphoserine is present on residues Ser125 and Ser132. Phosphothreonine is present on residues Thr135 and Thr138. Ser139 bears the Phosphoserine mark.

Belongs to the globin family. Heterotetramer of two alpha chains and two beta chains. In terms of tissue distribution, red blood cells.

Functionally, involved in oxygen transport from the lung to the various peripheral tissues. Its function is as follows. Hemopressin acts as an antagonist peptide of the cannabinoid receptor CNR1. Hemopressin-binding efficiently blocks cannabinoid receptor CNR1 and subsequent signaling. This is Hemoglobin subunit alpha-1/2 (Hba1) from Rattus norvegicus (Rat).